Consider the following 156-residue polypeptide: MPRKGPVAKRDVLPDPMYNSKLVTRLINKMMVDGKKGKSQTILYNAFDIVSERTGKEPMEVFEQALKNIMPVLEVRARRVGGANYQVPVEVRPERRTTLGLRWLVNYARLRGEKTMEERLANEILDAANNAGASVKKREDTHKMAEANKAFAHYRW.

This sequence belongs to the universal ribosomal protein uS7 family. Part of the 30S ribosomal subunit. Contacts proteins S9 and S11.

Functionally, one of the primary rRNA binding proteins, it binds directly to 16S rRNA where it nucleates assembly of the head domain of the 30S subunit. Is located at the subunit interface close to the decoding center, probably blocks exit of the E-site tRNA. In Bacillus cereus (strain ZK / E33L), this protein is Small ribosomal subunit protein uS7.